Reading from the N-terminus, the 190-residue chain is Translation initiation factor IF-3 (190 aa).

Belongs to the IF-3 family. Monomer.

Its subcellular location is the cytoplasm. In terms of biological role, IF-3 binds to the 30S ribosomal subunit and shifts the equilibrium between 70S ribosomes and their 50S and 30S subunits in favor of the free subunits, thus enhancing the availability of 30S subunits on which protein synthesis initiation begins. This Prochlorococcus marinus (strain MIT 9301) protein is Translation initiation factor IF-3.